The primary structure comprises 478 residues: NADH oxidase (478 aa).

FAD-binding positions include 8 to 12, Asp33, Cys43, Val80, 111 to 114, Lys149, and Tyr177; these read GINHA and ASGA. His11 serves as the catalytic Proton acceptor. Cys43 (redox-active) is an active-site residue. A Cysteine sulfinic acid (-SO2H) modification is found at Cys43. Residues 170-185, Asp197, and Gly264 contribute to the NAD(+) site; that span reads VAIV…LAEA. Residues 295-305, Leu322, Ala323, and Thr324 each bind FAD; that span reads LNHKDVYVIGG. Ala353 contacts NAD(+). Residue Phe450 participates in FAD binding.

The protein belongs to the class-III pyridine nucleotide-disulfide oxidoreductase family. Requires FAD as cofactor.

The catalysed reaction is 2 NADH + O2 + 2 H(+) = 2 NAD(+) + 2 H2O. Catalyzes the four-electron reduction of molecular oxygen to water. The chain is NADH oxidase (nox) from Mycoplasma genitalium (strain ATCC 33530 / DSM 19775 / NCTC 10195 / G37) (Mycoplasmoides genitalium).